The following is a 334-amino-acid chain: Putative lysine N-acyltransferase C17G9.06c (334 aa).

His-248 is a binding site for substrate. The active-site Proton acceptor is the Glu-286.

The protein belongs to the lysine N-acyltransferase mbtK family.

The protein resides in the cytoplasm. It is found in the nucleus. The protein is Putative lysine N-acyltransferase C17G9.06c of Schizosaccharomyces pombe (strain 972 / ATCC 24843) (Fission yeast).